We begin with the raw amino-acid sequence, 116 residues long: U16-barytoxin-Tl1f (116 aa).

Residues 1–20 (MKTIIVFLSLLVLATKFGDA) form the signal peptide. Residues 21-74 (NEGVNQEQMKEVIQNEFREDFLNEMAPMSLLQQLEAIESTLLEKEADRNSRQKR) constitute a propeptide that is removed on maturation. 3 cysteine pairs are disulfide-bonded: Cys-75–Cys-90, Cys-82–Cys-95, and Cys-89–Cys-110. Residue Asn-85 is glycosylated (N-linked (GlcNAc...) asparagine).

Belongs to the neurotoxin 14 (magi-1) family. 06 (ICK-Trit) subfamily. Expressed by the venom gland.

It is found in the secreted. Functionally, ion channel inhibitor. The sequence is that of U16-barytoxin-Tl1f from Trittame loki (Brush-footed trapdoor spider).